The chain runs to 110 residues: Phosphoribosyl-AMP cyclohydrolase (110 aa).

Position 74 (aspartate 74) interacts with Mg(2+). Cysteine 75 is a binding site for Zn(2+). Residues aspartate 76 and aspartate 78 each coordinate Mg(2+). Residues cysteine 91 and cysteine 98 each contribute to the Zn(2+) site.

Belongs to the PRA-CH family. As to quaternary structure, homodimer. Requires Mg(2+) as cofactor. It depends on Zn(2+) as a cofactor.

Its subcellular location is the cytoplasm. The catalysed reaction is 1-(5-phospho-beta-D-ribosyl)-5'-AMP + H2O = 1-(5-phospho-beta-D-ribosyl)-5-[(5-phospho-beta-D-ribosylamino)methylideneamino]imidazole-4-carboxamide. The protein operates within amino-acid biosynthesis; L-histidine biosynthesis; L-histidine from 5-phospho-alpha-D-ribose 1-diphosphate: step 3/9. Catalyzes the hydrolysis of the adenine ring of phosphoribosyl-AMP. In Lacticaseibacillus paracasei (strain ATCC 334 / BCRC 17002 / CCUG 31169 / CIP 107868 / KCTC 3260 / NRRL B-441) (Lactobacillus paracasei), this protein is Phosphoribosyl-AMP cyclohydrolase.